Consider the following 1704-residue polypeptide: Vitellogenin-1 (1704 aa).

A signal peptide spans 1–14 (MKAVVLALTLAFVA). The 639-residue stretch at 22–660 (FAAGKTYVYK…DAATFMPKSF (639 aa)) folds into the Vitellogenin domain. Residues N446, N635, N903, N908, N1019, N1054, N1080, N1121, N1174, N1285, N1322, N1375, N1379, N1405, N1456, and N1512 are each glycosylated (N-linked (GlcNAc...) asparagine). A compositionally biased stretch (low complexity) spans 1078–1109 (RRNSSSSSSSSSSSSSESRSSRSSSSSSSSSR). Positions 1078-1213 (RRNSSSSSSS…SSDRRSKEVM (136 aa)) are disordered. Low complexity predominate over residues 1122–1204 (SSSSSSSRRS…FSDSSSSSSS (83 aa)). Positions 1442-1617 (AECSFVEDTL…SWILPAESCR (176 aa)) constitute a VWFD domain. 2 disulfide bridges follow: C1444-C1580 and C1467-C1616.

Post-translationally, phosvitin, an egg yolk storage protein, is one of the most highly phosphorylated (10%) proteins in nature. In terms of processing, the N-terminal of the blood vitellogenin is blocked. Produced by the liver, secreted into the blood and then sequestered by receptor mediated endocytosis into growing oocytes, where it is generally cleaved, giving rise to the respective yolk components composed of complex suite of small cleavage products.

In terms of biological role, precursor of the major egg-yolk proteins that are sources of nutrients during early development of oviparous organisms. The sequence is that of Vitellogenin-1 (vtg1) from Fundulus heteroclitus (Killifish).